A 640-amino-acid chain; its full sequence is MAKVVGIDLGTTNSCVAVMEGGKPTVIANAEGFRTTPSVVAYTKNGDRLVGQIAKRQAVMNPENTFYSVKRFIGRRFDEVTHEATEVSYKVLNVNGNVKLDCPALGKQFAPEEISAQVLRKLKEDASKYLGEEVTQAVITVPAYFNDSQRQATKDAGKIAGLEVLRIINEPTAASLAYGLDKKANETILVFDLGGGTFDVSILEVGDGVFEVLATSGDTHLGGDDFDKKIVDYLAESFRAQEGIDLRKDRQALQRLTEAAEKAKIELSSVMQTEINLPFITATQDGPKHLDMTLTRAKFEELCSDLIDRCRVPVEQALKDAKLSKDQIDEVVLVGGSTRIPAIQELVKRLLGKDPNQSVNPDEVVAVGAAIQAGVLAGEVKDILLLDVTPLSLGVETLGGVMTKIIPRNTTIPTKKSEVFSTAVDGQTNVEIHVLQGEREMAADNKSLGTFRLDGIPPAPRGVPQIEVTFDIDANGILNVTARDKGTGKQQSISITGASTLPKEEVERMVREAEMNAAADKAKREKIETKNQAEQLCYQAEKQLNELGDKVSTSDKDRLTSLIANLRSEIGTEAEKKPIDAIDFGRVKSLMQDLQQALYSVGSSVYQSAQSSDGTGSSSSGGSGSGGDDEVIDAEFSETK.

Thr197 bears the Phosphothreonine; by autocatalysis mark. Residues 605–640 (VYQSAQSSDGTGSSSSGGSGSGGDDEVIDAEFSETK) are disordered. Residues 627 to 640 (GDDEVIDAEFSETK) show a composition bias toward acidic residues.

It belongs to the heat shock protein 70 family.

Its function is as follows. Acts as a chaperone. This is Chaperone protein dnaK2 (dnaK2) from Thermosynechococcus vestitus (strain NIES-2133 / IAM M-273 / BP-1).